We begin with the raw amino-acid sequence, 157 residues long: Large ribosomal subunit protein eL24 (157 aa).

A Glycyl lysine isopeptide (Lys-Gly) (interchain with G-Cter in SUMO2) cross-link involves residue Lys2. An ADP-ribosyl glutamic acid modification is found at Glu4. An N6-acetyllysine; alternate modification is found at Lys27. Residue Lys27 forms a Glycyl lysine isopeptide (Lys-Gly) (interchain with G-Cter in SUMO2); alternate linkage. Lys35 participates in a covalent cross-link: Glycyl lysine isopeptide (Lys-Gly) (interchain with G-Cter in SUMO2). An N6-acetyllysine modification is found at Lys77. Position 83 is a phosphothreonine (Thr83). Ser86 carries the phosphoserine modification. N6-acetyllysine is present on Lys93. Positions 106-117 are enriched in basic and acidic residues; the sequence is EQAIRAAKEAKK. The tract at residues 106–157 is disordered; sequence EQAIRAAKEAKKAKQASKKTAMAAAKAPTKAAPKQKIVKPVKVSAPRVGGKR. The span at 123-140 shows a compositional bias: low complexity; sequence KKTAMAAAKAPTKAAPKQ. Lys131 bears the N6-succinyllysine mark. Lys147 participates in a covalent cross-link: Glycyl lysine isopeptide (Lys-Gly) (interchain with G-Cter in SUMO2). Ser149 carries the phosphoserine modification.

It belongs to the eukaryotic ribosomal protein eL24 family. In terms of assembly, component of the large ribosomal subunit. In terms of processing, mono-ADP-ribosylation at Glu-4 by PARP16 inhibits polysome assembly and mRNA loading, thereby inhibiting protein translation.

It is found in the cytoplasm. Its function is as follows. Component of the large ribosomal subunit. The ribosome is a large ribonucleoprotein complex responsible for the synthesis of proteins in the cell. The protein is Large ribosomal subunit protein eL24 (RPL24) of Bos taurus (Bovine).